The chain runs to 159 residues: 2-C-methyl-D-erythritol 2,4-cyclodiphosphate synthase (159 aa).

D10 and H12 together coordinate a divalent metal cation. Residues 10–12 and 36–37 contribute to the 4-CDP-2-C-methyl-D-erythritol 2-phosphate site; these read DVH and HS. An a divalent metal cation-binding site is contributed by H44. Residues 58–60, 134–137, F141, and R144 contribute to the 4-CDP-2-C-methyl-D-erythritol 2-phosphate site; these read DIG and TTSE.

Belongs to the IspF family. As to quaternary structure, homotrimer. Requires a divalent metal cation as cofactor.

It catalyses the reaction 4-CDP-2-C-methyl-D-erythritol 2-phosphate = 2-C-methyl-D-erythritol 2,4-cyclic diphosphate + CMP. Its pathway is isoprenoid biosynthesis; isopentenyl diphosphate biosynthesis via DXP pathway; isopentenyl diphosphate from 1-deoxy-D-xylulose 5-phosphate: step 4/6. Involved in the biosynthesis of isopentenyl diphosphate (IPP) and dimethylallyl diphosphate (DMAPP), two major building blocks of isoprenoid compounds. Catalyzes the conversion of 4-diphosphocytidyl-2-C-methyl-D-erythritol 2-phosphate (CDP-ME2P) to 2-C-methyl-D-erythritol 2,4-cyclodiphosphate (ME-CPP) with a corresponding release of cytidine 5-monophosphate (CMP). This chain is 2-C-methyl-D-erythritol 2,4-cyclodiphosphate synthase, found in Cereibacter sphaeroides (strain ATCC 17025 / ATH 2.4.3) (Rhodobacter sphaeroides).